Here is a 272-residue protein sequence, read N- to C-terminus: Nitrogenase iron protein (272 aa).

ATP is bound at residue 8–15 (GKGGIGKS). C94 serves as a coordination point for [4Fe-4S] cluster. R97 carries the ADP-ribosylarginine; by dinitrogenase reductase ADP-ribosyltransferase modification. Position 129 (C129) interacts with [4Fe-4S] cluster.

The protein belongs to the NifH/BchL/ChlL family. As to quaternary structure, homodimer. The cofactor is [4Fe-4S] cluster. Post-translationally, the reversible ADP-ribosylation of Arg-97 inactivates the nitrogenase reductase and regulates nitrogenase activity.

It carries out the reaction N2 + 8 reduced [2Fe-2S]-[ferredoxin] + 16 ATP + 16 H2O = H2 + 8 oxidized [2Fe-2S]-[ferredoxin] + 2 NH4(+) + 16 ADP + 16 phosphate + 6 H(+). In terms of biological role, the key enzymatic reactions in nitrogen fixation are catalyzed by the nitrogenase complex, which has 2 components: the iron protein and the molybdenum-iron protein. The sequence is that of Nitrogenase iron protein from Clostridium acetobutylicum (strain ATCC 824 / DSM 792 / JCM 1419 / IAM 19013 / LMG 5710 / NBRC 13948 / NRRL B-527 / VKM B-1787 / 2291 / W).